Reading from the N-terminus, the 602-residue chain is Arp2/3 complex-activating protein rickA (602 aa).

Disordered stretches follow at residues 307 to 484 (SSLA…AGPK), 516 to 535 (VEFD…KPVQ), and 555 to 602 (MSDS…SFVK). Residues 318-442 (TPPPPLPGNN…IPPPPPPPMA (125 aa)) are compositionally biased toward pro residues. WH2 domains are found at residues 472–489 (DTSD…LRKV) and 499–516 (SRDL…LKKV). Over residues 475–484 (DLMREIAGPK) the composition is skewed to basic and acidic residues. The central and acidic domains stretch occupies residues 537 to 570 (VNKLSGVASILARRVVMEMSDSSGSESDSGNWSD). Residues 555–566 (MSDSSGSESDSG) are compositionally biased toward low complexity. Basic residues predominate over residues 578–590 (KTLKTKRERRKIL). Positions 591–602 (NNRNSQKPSFVK) are enriched in polar residues.

Homodimer.

The protein localises to the cell surface. In terms of biological role, recruits and activates the Arp2/3 complex, which in turn leads to actin polymerization, promoting Rickettsia motility during infection. The sequence is that of Arp2/3 complex-activating protein rickA (rickA) from Rickettsia montanensis.